A 98-amino-acid polypeptide reads, in one-letter code: Large ribosomal subunit protein uL23 (98 aa).

Belongs to the universal ribosomal protein uL23 family. Part of the 50S ribosomal subunit. Contacts protein L29, and trigger factor when it is bound to the ribosome.

One of the early assembly proteins it binds 23S rRNA. One of the proteins that surrounds the polypeptide exit tunnel on the outside of the ribosome. Forms the main docking site for trigger factor binding to the ribosome. This chain is Large ribosomal subunit protein uL23, found in Rickettsia peacockii (strain Rustic).